A 118-amino-acid polypeptide reads, in one-letter code: BolA-like protein 3 (118 aa).

This sequence belongs to the BolA/IbaG family. In terms of assembly, interacts with NFU1.

The protein resides in the mitochondrion matrix. Its function is as follows. Acts as a mitochondrial iron-sulfur (Fe-S) cluster assembly factor that facilitates [4Fe-4S] cluster insertion into a subset of mitochondrial proteins such as lipoyl synthase (LS) and succinate dehydrogenase (SDH). Required during the last step of iron-sulfur protein assembly when the iron-sulfur cluster is inserted into the target protein. Acts together with NFU1, later than BOL1 and GRX5 in the [4Fe-4S] cluster insertion process. Not required for [2Fe-2S] cluster insertion into mitochondrial proteins. The chain is BolA-like protein 3 from Saccharomyces cerevisiae (strain ATCC 204508 / S288c) (Baker's yeast).